Reading from the N-terminus, the 128-residue chain is MKQQVEVKELKEGKYVIIDDEACVIKSITKSKPGKHGAAKARVEAIGLFDGQKRSYIGSVANKIYVPIVERKTAQVISITGDITQLMDMGDFSTFEIVVPDEYKDKIKEGEEVSYITALGKIKLDIRT.

Lysine 35 carries the hypusine modification.

It belongs to the eIF-5A family.

The protein localises to the cytoplasm. Functionally, functions by promoting the formation of the first peptide bond. This chain is Translation initiation factor 5A, found in Methanosarcina barkeri (strain Fusaro / DSM 804).